The primary structure comprises 216 residues: MLKKNNKRKIFCSALVLGSFGFLAASFVSIIYVITKNKIQYQEQRYKNIIFNHIVPSNLHDNDIQRSCLILNNKLLGDKKNHYLWLAKKKQDITAVIFETIAPDGYSGIIKMVISLDIKNGKILGVRVLSHNETPGLGDKIDVNISNWITKFSGVKIFSLDERDLSLKKYGGNIDQFTGATITPLAVVNSIKRTIVLVKMLLSSKFSELTSCDNYE.

The helical transmembrane segment at 14-34 threads the bilayer; it reads ALVLGSFGFLAASFVSIIYVI. T181 carries the FMN phosphoryl threonine modification.

This sequence belongs to the RnfG family. The complex is composed of six subunits: RnfA, RnfB, RnfC, RnfD, RnfE and RnfG. The cofactor is FMN.

The protein localises to the cell inner membrane. Part of a membrane-bound complex that couples electron transfer with translocation of ions across the membrane. The sequence is that of Ion-translocating oxidoreductase complex subunit G from Buchnera aphidicola subsp. Baizongia pistaciae (strain Bp).